A 730-amino-acid chain; its full sequence is Wall-associated receptor kinase-like 3 (730 aa).

Positions methionine 1–alanine 25 are cleaved as a signal peptide. Topologically, residues alanine 26–valine 357 are extracellular. Residues asparagine 32, asparagine 38, asparagine 68, asparagine 90, asparagine 119, asparagine 132, asparagine 212, asparagine 233, and asparagine 269 are each glycosylated (N-linked (GlcNAc...) asparagine). Positions cysteine 283–cysteine 340 are atypical EGF-like. 3 disulfides stabilise this stretch: cysteine 285/cysteine 298, cysteine 320/cysteine 331, and cysteine 326/cysteine 340. The helical transmembrane segment at leucine 358–isoleucine 378 threads the bilayer. The Cytoplasmic portion of the chain corresponds to arginine 379–serine 730. The Protein kinase domain occupies phenylalanine 428–isoleucine 699. Residues leucine 434–valine 442 and lysine 456 each bind ATP. The Proton acceptor role is filled by aspartate 553. Residues proline 703–serine 730 are disordered. The span at asparagine 712–leucine 721 shows a compositional bias: acidic residues.

This sequence belongs to the protein kinase superfamily. Ser/Thr protein kinase family. In terms of tissue distribution, preferentially expressed in roots and flowers.

It localises to the membrane. It carries out the reaction L-seryl-[protein] + ATP = O-phospho-L-seryl-[protein] + ADP + H(+). The enzyme catalyses L-threonyl-[protein] + ATP = O-phospho-L-threonyl-[protein] + ADP + H(+). Serine/threonine-protein kinase that may function as a signaling receptor of extracellular matrix component. In Arabidopsis thaliana (Mouse-ear cress), this protein is Wall-associated receptor kinase-like 3 (WAKL3).